The primary structure comprises 543 residues: Chaperonin GroEL (543 aa).

Residues 29–32 (TLGP), 86–90 (DGTTT), Gly-413, 477–479 (DAL), and Asp-493 contribute to the ATP site.

Belongs to the chaperonin (HSP60) family. Forms a cylinder of 14 subunits composed of two heptameric rings stacked back-to-back. Interacts with the co-chaperonin GroES.

It is found in the cytoplasm. It carries out the reaction ATP + H2O + a folded polypeptide = ADP + phosphate + an unfolded polypeptide.. Functionally, together with its co-chaperonin GroES, plays an essential role in assisting protein folding. The GroEL-GroES system forms a nano-cage that allows encapsulation of the non-native substrate proteins and provides a physical environment optimized to promote and accelerate protein folding. The sequence is that of Chaperonin GroEL from Clostridium novyi (strain NT).